The sequence spans 152 residues: VVSTSPTKLVNVSYNNLTVNLGNELTPTQVKNQPTKVSWDAEPGALYTLVMTDPDAPSRKNPVFREWHHWLIINISGQNVSSGTVLSDYIGSGPPKGTGLHRYVFLVYKQPGSITDTQHGGNRPNFKVMDFANKHHLGNPVAGNFFQAKHED.

This sequence belongs to the phosphatidylethanolamine-binding protein family.

In Onchocerca volvulus, this protein is Protein D1 (D1).